The following is a 431-amino-acid chain: tRNA(Ile)-lysidine synthase (431 aa).

S26 to S31 contacts ATP.

The protein belongs to the tRNA(Ile)-lysidine synthase family.

Its subcellular location is the cytoplasm. It catalyses the reaction cytidine(34) in tRNA(Ile2) + L-lysine + ATP = lysidine(34) in tRNA(Ile2) + AMP + diphosphate + H(+). Ligates lysine onto the cytidine present at position 34 of the AUA codon-specific tRNA(Ile) that contains the anticodon CAU, in an ATP-dependent manner. Cytidine is converted to lysidine, thus changing the amino acid specificity of the tRNA from methionine to isoleucine. This Wolbachia sp. subsp. Brugia malayi (strain TRS) protein is tRNA(Ile)-lysidine synthase.